Consider the following 190-residue polypeptide: CASP-like protein 1E2 (190 aa).

Residues 1–12 show a composition bias toward low complexity; the sequence is MENEGKNNMNGM. Residues 1 to 24 form a disordered region; that stretch reads MENEGKNNMNGMEMEKGKRESRSR. Over 1–28 the chain is Cytoplasmic; it reads MENEGKNNMNGMEMEKGKRESRSRKGVE. The span at 13-24 shows a compositional bias: basic and acidic residues; it reads EMEKGKRESRSR. Residues 29–49 form a helical membrane-spanning segment; that stretch reads LTMRVLALVLTMAAATVLGVA. At 50-83 the chain is on the extracellular side; the sequence is KQTKVVSIKLIPALPPLDITTTAKASYLSAFVYN. The helical transmembrane segment at 84-104 threads the bilayer; it reads ISANAIACGYTAISIAILMIS. The Cytoplasmic portion of the chain corresponds to 105-111; it reads RGRRSKK. The chain crosses the membrane as a helical span at residues 112 to 132; the sequence is LLMAVLLGDLVMVALLFSGTG. Residues 133 to 163 are Extracellular-facing; that stretch reads AASAIGLMGLQGNKHVMWNKVCGVFGKFCHR. A helical membrane pass occupies residues 164–184; sequence AAPSLPLTFLAAVVFMFLVVL. At 185–190 the chain is on the cytoplasmic side; the sequence is DAIKLP.

Belongs to the Casparian strip membrane proteins (CASP) family. In terms of assembly, homodimer and heterodimers.

It is found in the cell membrane. The chain is CASP-like protein 1E2 from Arabidopsis lyrata subsp. lyrata (Lyre-leaved rock-cress).